Reading from the N-terminus, the 128-residue chain is Small ribosomal subunit protein uS11 (128 aa).

The protein belongs to the universal ribosomal protein uS11 family. Part of the 30S ribosomal subunit. Interacts with proteins S7 and S18. Binds to IF-3.

Located on the platform of the 30S subunit, it bridges several disparate RNA helices of the 16S rRNA. Forms part of the Shine-Dalgarno cleft in the 70S ribosome. The chain is Small ribosomal subunit protein uS11 from Desulfatibacillum aliphaticivorans.